The primary structure comprises 198 residues: Recombination protein RecR (198 aa).

A C4-type zinc finger spans residues 56–71 (CGVCGNVDTSNPCGIC). A Toprim domain is found at 79–174 (RSICVVEEVA…RVTQLAHGLP (96 aa)).

Belongs to the RecR family.

In terms of biological role, may play a role in DNA repair. It seems to be involved in an RecBC-independent recombinational process of DNA repair. It may act with RecF and RecO. The protein is Recombination protein RecR of Novosphingobium aromaticivorans (strain ATCC 700278 / DSM 12444 / CCUG 56034 / CIP 105152 / NBRC 16084 / F199).